The chain runs to 588 residues: DNA mismatch repair protein MutL (588 aa).

The protein belongs to the DNA mismatch repair MutL/HexB family.

Functionally, this protein is involved in the repair of mismatches in DNA. It is required for dam-dependent methyl-directed DNA mismatch repair. May act as a 'molecular matchmaker', a protein that promotes the formation of a stable complex between two or more DNA-binding proteins in an ATP-dependent manner without itself being part of a final effector complex. This chain is DNA mismatch repair protein MutL, found in Fervidobacterium nodosum (strain ATCC 35602 / DSM 5306 / Rt17-B1).